A 325-amino-acid polypeptide reads, in one-letter code: DNA repair and recombination protein RadA (325 aa).

An ATP-binding site is contributed by 107-114 (GEFGSGKT).

It belongs to the eukaryotic RecA-like protein family.

Functionally, involved in DNA repair and in homologous recombination. Binds and assemble on single-stranded DNA to form a nucleoprotein filament. Hydrolyzes ATP in a ssDNA-dependent manner and promotes DNA strand exchange between homologous DNA molecules. The protein is DNA repair and recombination protein RadA of Methanosarcina acetivorans (strain ATCC 35395 / DSM 2834 / JCM 12185 / C2A).